Reading from the N-terminus, the 2670-residue chain is Inositol 1,4,5-trisphosphate-gated calcium channel ITPR3 (2670 aa).

Over 1-2233 the chain is Cytoplasmic; sequence MNEMSSFLHI…YVEGASTGVL (2233 aa). MIR domains are found at residues 113–173, 174–224, 232–288, 295–372, and 378–434; these read GDVV…LRSN, GDNV…INLF, EEVL…VEVV, GGAG…LDPT, and DSFV…IVSV. 1D-myo-inositol 1,4,5-trisphosphate contacts are provided by Arg-266, Leu-269, and Arg-270. 1D-myo-inositol 1,4,5-trisphosphate is bound by residues Arg-503, Lys-507, Arg-510, Tyr-567, Arg-568, and Lys-569. Residue Arg-743 participates in Ca(2+) binding. Phosphoserine is present on residues Ser-916 and Ser-934. Glu-1122 and Glu-1125 together coordinate Ca(2+). Positions 1138–1153 are enriched in basic and acidic residues; the sequence is EVEAGATKDKKERPSD. Disordered regions lie at residues 1138 to 1164 and 1807 to 1835; these read EVEA…HGEK and NMSD…SFSM. A phosphoserine mark is found at Ser-1813, Ser-1832, and Ser-1834. Ca(2+)-binding residues include Glu-1881 and Glu-1945. Residues Ala-1995, Glu-2148, and Lys-2151 each coordinate ATP. Residues 2234–2254 traverse the membrane as a helical segment; sequence GSPLISLLFWILICFSIAALF. The Extracellular portion of the chain corresponds to 2255-2262; that stretch reads TKRYSVRP. A helical transmembrane segment spans residues 2263-2283; sequence LIVALILRSIYYLGIGPTLNI. The Cytoplasmic portion of the chain corresponds to 2284–2292; the sequence is LGALNLTNK. The helical transmembrane segment at 2293-2310 threads the bilayer; that stretch reads IVFVVSFVGNRGTFIRGY. The Extracellular portion of the chain corresponds to 2311-2324; sequence KAMVMDMEFLYHVG. A helical membrane pass occupies residues 2325 to 2345; the sequence is YILTSVLGLFAHELFYSILLF. Topologically, residues 2346 to 2367 are cytoplasmic; sequence DLIYREETLFNVIKSVTRNGRS. A helical transmembrane segment spans residues 2368-2388; sequence ILLTALLALILVYLFSIVGFL. The Extracellular segment spans residues 2389–2495; sequence FLKDDFILEV…ESLFPARVVY (107 aa). Cysteines 2454 and 2460 form a disulfide. The chain crosses the membrane as a helical span at residues 2496 to 2516; the sequence is DLLFFFIVIIIVLNLIFGVII. At 2517-2670 the chain is on the cytoplasmic side; the sequence is DTFADLRSEK…FVDVQNCMSR (154 aa). The ATP site is built by Cys-2537 and Phe-2538. Position 2537 (Cys-2537) interacts with Zn(2+). Cys-2540 and His-2557 together coordinate Zn(2+). Lys-2559, His-2562, Asn-2563, and Met-2564 together coordinate ATP. A Zn(2+)-binding site is contributed by His-2562. Thr-2580 contributes to the Ca(2+) binding site. Residues Ser-2608 and Ser-2669 each carry the phosphoserine modification.

It belongs to the InsP3 receptor family. Homodimer. Homotetramer. Interacts with TRPC1, TRPC3, TRPC4. Interacts with TRPV4. Interacts with SIGMAR1. Found in a complex with AKT1 and PML; this interaction modulates IP3R3-phosphorylation and in turn ITPR3-dependent calcium release. Interacts with IRAG2 (via coiled-coil domain). Interacts with CABP1. Interacts with TMBIM4/LFG4. Interacts with CEMIP. Interacts with TESPA1. Interacts with TMEM203. Interacts with BOK; regulates ITPR3 expression. Interacts with BCL2L10. Interacts with CHGA and CHGB. Post-translationally, phosphorylated by AKT1 on serine and/or threonine residues.

It is found in the endoplasmic reticulum membrane. The protein localises to the cytoplasmic vesicle. It localises to the secretory vesicle membrane. It carries out the reaction Ca(2+)(in) = Ca(2+)(out). Its activity is regulated as follows. Inositol 1,4,5-trisphosphate-gated calcium channel is regulated by cytosolic calcium in a biphasic manner. At low concentrations, cytosolic calcium binds at a high-affinity juxtamembrane domain (JD) calcium binding site, allowing ITPR3 to activate by escaping a low-energy resting state through an ensemble of preactivated states. At high cytosolic calcium concentrations, ITPR3 preferentially enters an inhibited state stabilized by calcium binding at a second, low-affinity cytoplasmic domain (CD) calcium binding site. In terms of biological role, inositol 1,4,5-trisphosphate-gated calcium channel that, upon 1D-myo-inositol 1,4,5-trisphosphate binding, transports calcium from the endoplasmic reticulum lumen to cytoplasm, thus releasing the intracellular calcium and therefore participates in cellular calcium ion homeostasis. 1D-myo-inositol 1,4,5-trisphosphate binds to the ligand-free channel without altering its global conformation, yielding the low-energy resting state, then progresses through resting-to preactivated transitions to the higher energy preactivated state, which increases affinity for calcium, promoting binding of the low basal cytosolic calcium at the juxtamembrane domain (JD) site, favoring the transition through the ensemble of high-energy intermediate states along the trajectory to the fully-open activated state. Upon opening, releases calcium in the cytosol where it can bind to the low-affinity cytoplasmic domain (CD) site and stabilizes the inhibited state to terminate calcium release. The sequence is that of Inositol 1,4,5-trisphosphate-gated calcium channel ITPR3 from Mus musculus (Mouse).